The primary structure comprises 483 residues: tRNA sulfurtransferase (483 aa).

Positions 62–166 constitute a THUMP domain; it reads PQICDALTRV…QDKLTLIKAR (105 aa). ATP-binding positions include 184-185, lysine 266, glycine 288, and glutamine 297; that span reads LI. A disulfide bridge connects residues cysteine 345 and cysteine 457. The Rhodanese domain maps to 405-483; sequence LADTDVLLDI…GYTNVKVYRP (79 aa). Cysteine 457 acts as the Cysteine persulfide intermediate in catalysis.

Belongs to the ThiI family.

The protein resides in the cytoplasm. It catalyses the reaction [ThiI sulfur-carrier protein]-S-sulfanyl-L-cysteine + a uridine in tRNA + 2 reduced [2Fe-2S]-[ferredoxin] + ATP + H(+) = [ThiI sulfur-carrier protein]-L-cysteine + a 4-thiouridine in tRNA + 2 oxidized [2Fe-2S]-[ferredoxin] + AMP + diphosphate. The catalysed reaction is [ThiS sulfur-carrier protein]-C-terminal Gly-Gly-AMP + S-sulfanyl-L-cysteinyl-[cysteine desulfurase] + AH2 = [ThiS sulfur-carrier protein]-C-terminal-Gly-aminoethanethioate + L-cysteinyl-[cysteine desulfurase] + A + AMP + 2 H(+). It participates in cofactor biosynthesis; thiamine diphosphate biosynthesis. Functionally, catalyzes the ATP-dependent transfer of a sulfur to tRNA to produce 4-thiouridine in position 8 of tRNAs, which functions as a near-UV photosensor. Also catalyzes the transfer of sulfur to the sulfur carrier protein ThiS, forming ThiS-thiocarboxylate. This is a step in the synthesis of thiazole, in the thiamine biosynthesis pathway. The sulfur is donated as persulfide by IscS. The protein is tRNA sulfurtransferase of Yersinia enterocolitica serotype O:8 / biotype 1B (strain NCTC 13174 / 8081).